The primary structure comprises 69 residues: Sec-independent protein translocase protein TatA (69 aa).

The chain crosses the membrane as a helical span at residues 1 to 21; the sequence is MFGKLGMPELVLIFAVALVIF.

It belongs to the TatA/E family. As to quaternary structure, forms a complex with TatC.

It localises to the cell membrane. In terms of biological role, part of the twin-arginine translocation (Tat) system that transports large folded proteins containing a characteristic twin-arginine motif in their signal peptide across membranes. TatA could form the protein-conducting channel of the Tat system. This Alkaliphilus metalliredigens (strain QYMF) protein is Sec-independent protein translocase protein TatA.